A 423-amino-acid polypeptide reads, in one-letter code: UDP-N-acetylglucosamine 1-carboxyvinyltransferase 2 (423 aa).

Residue 23–24 (KN) coordinates phosphoenolpyruvate. Arg-93 is a UDP-N-acetyl-alpha-D-glucosamine binding site. The Proton donor role is filled by Cys-117. A 2-(S-cysteinyl)pyruvic acid O-phosphothioketal modification is found at Cys-117. Residues 122-126 (RPIDQ), Asp-305, and Ile-327 each bind UDP-N-acetyl-alpha-D-glucosamine.

This sequence belongs to the EPSP synthase family. MurA subfamily.

It is found in the cytoplasm. It catalyses the reaction phosphoenolpyruvate + UDP-N-acetyl-alpha-D-glucosamine = UDP-N-acetyl-3-O-(1-carboxyvinyl)-alpha-D-glucosamine + phosphate. The protein operates within cell wall biogenesis; peptidoglycan biosynthesis. In terms of biological role, cell wall formation. Adds enolpyruvyl to UDP-N-acetylglucosamine. The chain is UDP-N-acetylglucosamine 1-carboxyvinyltransferase 2 from Listeria innocua serovar 6a (strain ATCC BAA-680 / CLIP 11262).